Consider the following 283-residue polypeptide: Elongation factor Ts (283 aa).

The interval 80-83 (TDFV) is involved in Mg(2+) ion dislocation from EF-Tu.

This sequence belongs to the EF-Ts family.

Its subcellular location is the cytoplasm. Functionally, associates with the EF-Tu.GDP complex and induces the exchange of GDP to GTP. It remains bound to the aminoacyl-tRNA.EF-Tu.GTP complex up to the GTP hydrolysis stage on the ribosome. The sequence is that of Elongation factor Ts from Salmonella choleraesuis (strain SC-B67).